We begin with the raw amino-acid sequence, 182 residues long: Alpha-S2-casein (182 aa).

A signal peptide spans 1 to 15 (MKFFIFTCLLAVALA). Phosphoserine is present on residues Ser22, Ser23, and Ser24.

The protein belongs to the alpha-casein family. Mammary gland specific. Secreted in milk.

Its subcellular location is the secreted. Functionally, important role in the capacity of milk to transport calcium phosphate. The sequence is that of Alpha-S2-casein (CSN1S2) from Oryctolagus cuniculus (Rabbit).